We begin with the raw amino-acid sequence, 254 residues long: Keratin-associated protein 24-1 (254 aa).

6 consecutive repeat copies span residues 193–202 (YISNSCQPQS), 203–212 (YLVRNYHYSS), 213–222 (YRPTSCRPLS), 223–232 (YLSRSFRSLS), 233–242 (YIPSTFPPLR), and 243–252 (YLCSGSRPLK). Residues 193–252 (YISNSCQPQSYLVRNYHYSSYRPTSCRPLSYLSRSFRSLSYIPSTFPPLRYLCSGSRPLK) form a 6 X 10 AA repeats of Y-[ILR]-[SVPC]-[NRTS]-[SNTG]-X-[QHRP]-[PSY]-[QSL]-[SRK] region.

Belongs to the PMG family. Interacts with hair keratins. In terms of tissue distribution, specific expression in the middle/upper hair cuticle.

Its function is as follows. In the hair cortex, hair keratin intermediate filaments are embedded in an interfilamentous matrix, consisting of hair keratin-associated proteins (KRTAP), which are essential for the formation of a rigid and resistant hair shaft through their extensive disulfide bond cross-linking with abundant cysteine residues of hair keratins. The matrix proteins include the high-sulfur and high-glycine-tyrosine keratins. In Homo sapiens (Human), this protein is Keratin-associated protein 24-1 (KRTAP24-1).